Reading from the N-terminus, the 429-residue chain is Ribosomal RNA small subunit methyltransferase B (429 aa).

S-adenosyl-L-methionine-binding positions include 254-260, Asp277, Asp303, and Asp322; that span reads CAAPGGK. Catalysis depends on Cys375, which acts as the Nucleophile. The segment at 397 to 419 is disordered; it reads ALSETGTPDQPGQQNLPGGEEGD. A compositionally biased stretch (polar residues) spans 400 to 412; that stretch reads ETGTPDQPGQQNL.

The protein belongs to the class I-like SAM-binding methyltransferase superfamily. RsmB/NOP family.

Its subcellular location is the cytoplasm. The catalysed reaction is cytidine(967) in 16S rRNA + S-adenosyl-L-methionine = 5-methylcytidine(967) in 16S rRNA + S-adenosyl-L-homocysteine + H(+). Its function is as follows. Specifically methylates the cytosine at position 967 (m5C967) of 16S rRNA. In Salmonella typhi, this protein is Ribosomal RNA small subunit methyltransferase B.